A 241-amino-acid polypeptide reads, in one-letter code: LexA repressor (241 aa).

The H-T-H motif DNA-binding region spans 26–46; sequence FDEMKTALDLRSKSGIHRLIT. Active-site for autocatalytic cleavage activity residues include S162 and K200.

It belongs to the peptidase S24 family. Homodimer.

It carries out the reaction Hydrolysis of Ala-|-Gly bond in repressor LexA.. Represses a number of genes involved in the response to DNA damage (SOS response), including recA and lexA. In the presence of single-stranded DNA, RecA interacts with LexA causing an autocatalytic cleavage which disrupts the DNA-binding part of LexA, leading to derepression of the SOS regulon and eventually DNA repair. The chain is LexA repressor from Ruegeria sp. (strain TM1040) (Silicibacter sp.).